A 265-amino-acid polypeptide reads, in one-letter code: Mlc titration factor A (265 aa).

His-111, His-148, His-152, and Glu-211 together coordinate Zn(2+).

This sequence belongs to the MtfA family. In terms of assembly, interacts with Mlc. Zn(2+) serves as cofactor.

It is found in the cytoplasm. Its function is as follows. Involved in the modulation of the activity of the glucose-phosphotransferase system (glucose-PTS). Interacts with the transcriptional repressor Mlc, preventing its interaction with DNA and leading to the modulation of expression of genes regulated by Mlc, including ptsG, which encodes the PTS system glucose-specific EIICB component. In terms of biological role, shows zinc-dependent metallopeptidase activity. The polypeptide is Mlc titration factor A (Salmonella agona (strain SL483)).